A 624-amino-acid polypeptide reads, in one-letter code: DNA mismatch repair protein MutL (624 aa).

It belongs to the DNA mismatch repair MutL/HexB family.

This protein is involved in the repair of mismatches in DNA. It is required for dam-dependent methyl-directed DNA mismatch repair. May act as a 'molecular matchmaker', a protein that promotes the formation of a stable complex between two or more DNA-binding proteins in an ATP-dependent manner without itself being part of a final effector complex. The chain is DNA mismatch repair protein MutL from Xanthomonas campestris pv. campestris (strain B100).